Here is a 320-residue protein sequence, read N- to C-terminus: Olfactory receptor 2T12 (320 aa).

Over 1–23 (MEMRNTTPDFILLGLFNHTRAHQ) the chain is Extracellular. N-linked (GlcNAc...) asparagine glycosylation is present at Asn17. The helical transmembrane segment at 24 to 47 (VLFMMLLATVLTSLFSNALMILLI) threads the bilayer. At 48–55 (HWDHRLHR) the chain is on the cytoplasmic side. Residues 56–77 (PMYFLLSQLSLMDMMLVSTTVP) form a helical membrane-spanning segment. Over 78–98 (KMAADYLTGNKAISRAGCGVQ) the chain is Extracellular. Cysteines 95 and 187 form a disulfide. Residues 99-118 (IFFLPTLGGGECFLLAAMAY) traverse the membrane as a helical segment. The Cytoplasmic portion of the chain corresponds to 119 to 137 (DRYAAVCHPLRYPTLMSWQ). The chain crosses the membrane as a helical span at residues 138-156 (LCLRMTMSSWLLGAADGLL). At 157–193 (QAVATLSFPYCGAHEIDHFFCEAPVLVRLACADTSVF) the chain is on the extracellular side. The helical transmembrane segment at 194–217 (ENAMYICCVLMLLVPFSLILSSYG) threads the bilayer. The Cytoplasmic segment spans residues 218 to 234 (LILAAVLLMRSTEARKK). The chain crosses the membrane as a helical span at residues 235 to 257 (AFATCSSHVAVVGLFYGAGIFTY). Over 258–270 (MRPKSHRSTNHDK) the chain is Extracellular. Residues 271 to 290 (VVSAFYTMFTPLLNPLIYSV) form a helical membrane-spanning segment. At 291-320 (RNSEVKEALKRWLGTCVNLKHQQNEAHRSR) the chain is on the cytoplasmic side.

It belongs to the G-protein coupled receptor 1 family.

It localises to the cell membrane. Functionally, odorant receptor. The protein is Olfactory receptor 2T12 (OR2T12) of Homo sapiens (Human).